A 203-amino-acid polypeptide reads, in one-letter code: MSEHVNKYTEYEARTKAIETLLYERGLITPAAVDRVVSYYENEIGPMGGAKVVAKSWVDPEYRKWLEEDATAAMASLGYAGEQAHQISAVFNDSQTHHVVVCTLCSCYPWPVLGLPPAWYKSMEYRSRVVADPRGVLKRDFGFDIPDEVEVRVWDSSSEIRYIVIPERPAGTDGWSEEELTKLVSRDSMIGVSNALTPQEVIV.

The Co(3+) site is built by cysteine 102, cysteine 105, serine 106, and cysteine 107.

It belongs to the nitrile hydratase subunit alpha family. Heterodimer of an alpha and a beta chain. Co(3+) serves as cofactor.

The enzyme catalyses an aliphatic primary amide = an aliphatic nitrile + H2O. In terms of biological role, NHase catalyzes the hydration of various nitrile compounds to the corresponding amides. In Rhodococcus rhodochrous, this protein is High-molecular weight cobalt-containing nitrile hydratase subunit alpha (nhhA).